Reading from the N-terminus, the 78-residue chain is Small ribosomal subunit protein bS16c (78 aa).

It belongs to the bacterial ribosomal protein bS16 family.

The protein localises to the plastid. It localises to the chloroplast. This is Small ribosomal subunit protein bS16c from Daucus carota (Wild carrot).